The primary structure comprises 117 residues: uncharacterized protein (117 aa).

A helical membrane pass occupies residues 76-96 (FIMSSGCFLIASLSCVGLTVF).

The protein resides in the membrane. This is an uncharacterized protein from Saccharomyces cerevisiae (strain ATCC 204508 / S288c) (Baker's yeast).